A 118-amino-acid chain; its full sequence is Putative pterin-4-alpha-carbinolamine dehydratase (118 aa).

The protein belongs to the pterin-4-alpha-carbinolamine dehydratase family.

The enzyme catalyses (4aS,6R)-4a-hydroxy-L-erythro-5,6,7,8-tetrahydrobiopterin = (6R)-L-erythro-6,7-dihydrobiopterin + H2O. The polypeptide is Putative pterin-4-alpha-carbinolamine dehydratase (Pseudomonas savastanoi pv. phaseolicola (strain 1448A / Race 6) (Pseudomonas syringae pv. phaseolicola (strain 1448A / Race 6))).